A 485-amino-acid polypeptide reads, in one-letter code: Glycogen synthase (485 aa).

Lys18 contributes to the ADP-alpha-D-glucose binding site.

It belongs to the glycosyltransferase 1 family. Bacterial/plant glycogen synthase subfamily.

The catalysed reaction is [(1-&gt;4)-alpha-D-glucosyl](n) + ADP-alpha-D-glucose = [(1-&gt;4)-alpha-D-glucosyl](n+1) + ADP + H(+). It participates in glycan biosynthesis; glycogen biosynthesis. Synthesizes alpha-1,4-glucan chains using ADP-glucose. The sequence is that of Glycogen synthase from Dechloromonas aromatica (strain RCB).